We begin with the raw amino-acid sequence, 136 residues long: Putative LysR family substrate binding domain-containing protein YagP (136 aa).

The protein belongs to the LysR transcriptional regulatory family.

The chain is Putative LysR family substrate binding domain-containing protein YagP (yagP) from Escherichia coli (strain K12).